A 428-amino-acid polypeptide reads, in one-letter code: Adenylosuccinate synthetase (428 aa).

Residues 11 to 17 (GDEGKGK) and 39 to 41 (GHT) contribute to the GTP site. Catalysis depends on aspartate 12, which acts as the Proton acceptor. 2 residues coordinate Mg(2+): aspartate 12 and glycine 39. Residues 12-15 (DEGK), 37-40 (NAGH), threonine 130, arginine 144, asparagine 226, threonine 241, and arginine 305 each bind IMP. Histidine 40 acts as the Proton donor in catalysis. 301–307 (VTTGRKR) serves as a coordination point for substrate. GTP-binding positions include arginine 307, 333 to 335 (KLD), and 415 to 417 (GTG).

Belongs to the adenylosuccinate synthetase family. As to quaternary structure, homodimer. It depends on Mg(2+) as a cofactor.

The protein resides in the cytoplasm. The enzyme catalyses IMP + L-aspartate + GTP = N(6)-(1,2-dicarboxyethyl)-AMP + GDP + phosphate + 2 H(+). The protein operates within purine metabolism; AMP biosynthesis via de novo pathway; AMP from IMP: step 1/2. In terms of biological role, plays an important role in the de novo pathway and in the salvage pathway of purine nucleotide biosynthesis. Catalyzes the first committed step in the biosynthesis of AMP from IMP. In Lodderomyces elongisporus (strain ATCC 11503 / CBS 2605 / JCM 1781 / NBRC 1676 / NRRL YB-4239) (Yeast), this protein is Adenylosuccinate synthetase.